The sequence spans 358 residues: MKFGPETIIHGDCIEQMNALPEKSVDLIFADPPYNLQLGGDLLRPDNSKVDAVDDHWDQFESFAAYDKFTREWLKAARRVLKDDGAIWVIGSYHNIFRVGVAVQDLGFWILNDIVWRKSNPMPNFKGTRFANAHETLIWASKSQNAKRYTFNYDALKMANDEVQMRSDWTIPLCTGEERIKGADGQKAHPTQKPEALLYRVILSTTKPGDVILDPFFGVGTTGAAAKRLGRKFIGIEREAEYLEHAKARIAKVVPIAPEDLDVMGSKRAEPRVPFGTIVEAGLLSPGDTLYCSKGTHVAKVRPDGSITVGDLSGSIHKIGALVQSAPACNGWTYWHFKTDAGLAPIDVLRAQVRAGMN.

The interval M1–D260 is methyltransferase. 2 consecutive DNA-binding regions (target strand DNA) follow at residues D31–Y34 and G39–P45. 2 DNA-binding regions (non-target strand DNA) span residues Y93–H94 and W109–I110. DsDNA is bound at residue H94. Residues M122–N132 constitute a DNA-binding region (target strand DNA). A DNA-binding region (non-target strand DNA) is located at residues Y153 to K157. DsDNA contacts are provided by Q164 and R179. Residues K187–K193 constitute a DNA-binding region (target strand DNA). The RAMA domain occupies E259–A355. The linker stretch occupies residues L261–E270. 2 residues coordinate dsDNA: K267 and R272. Positions R272–N358 are non-specific DNA-binding. 2 consecutive DNA-binding regions (non-target strand DNA) follow at residues S315–H317 and N330–W332. R350 is a dsDNA binding site.

Belongs to the N(4)/N(6)-methyltransferase family. As to quaternary structure, homodimer. Rapidly degraded by Lon protease prior to cell division.

The catalysed reaction is a 2'-deoxyadenosine in DNA + S-adenosyl-L-methionine = an N(6)-methyl-2'-deoxyadenosine in DNA + S-adenosyl-L-homocysteine + H(+). Its function is as follows. A beta subtype methylase that recognizes the double-stranded sequence 5'-GANTC-3' and methylates non-modifed A-2 on the hemimethylated, post-replicative DNA. Opens a bubble in the DNA at the recognition site, allowing precise recognition of the sequence and ensuring enzyme specificity. Functions only in the predivisional cell. Responsible for 5'-GANTC-3' methylation in the cell; methylation of hemimethylated sites generated after replication fork passage occurs late in the predivisional cell, near completion of chromosome replication but prior to cell division. Contributes to the accurate cell-cycle control of DNA replication and cellular morphology. In Caulobacter vibrioides (strain ATCC 19089 / CIP 103742 / CB 15) (Caulobacter crescentus), this protein is DNA methyltransferase CcrM (ccrMIM).